The chain runs to 433 residues: GTPase Der (433 aa).

2 consecutive EngA-type G domains span residues 3–167 (NRVV…KEEK) and 175–347 (IKVA…KDYT). GTP is bound by residues 9–16 (GRPNVGKS), 56–60 (DTGGL), 119–122 (NKID), 181–188 (GRPNVGKS), 228–232 (DTAGV), and 293–296 (NKMD). Residues 348–432 (KQHKTSFVNR…PIKLVIKGRE (85 aa)) enclose the KH-like domain.

It belongs to the TRAFAC class TrmE-Era-EngA-EngB-Septin-like GTPase superfamily. EngA (Der) GTPase family. As to quaternary structure, associates with the 50S ribosomal subunit.

GTPase that plays an essential role in the late steps of ribosome biogenesis. The sequence is that of GTPase Der from Aquifex aeolicus (strain VF5).